The primary structure comprises 265 residues: Orphan methyltransferase M.BamHII (265 aa).

Belongs to the N(4)/N(6)-methyltransferase family. N(4) subfamily.

The enzyme catalyses a 2'-deoxycytidine in DNA + S-adenosyl-L-methionine = an N(4)-methyl-2'-deoxycytidine in DNA + S-adenosyl-L-homocysteine + H(+). Its function is as follows. A beta subtype methylase, recognizes the double-stranded sequence 5'-GGATCC-3', methylates C-? on both strands. No endonuclease has been identified for this methylase, although it is speculated it might protect against BamHI. The polypeptide is Orphan methyltransferase M.BamHII (bamHIIM) (Bacillus amyloliquefaciens (Bacillus velezensis)).